Reading from the N-terminus, the 382-residue chain is LIM homeobox transcription factor 1-alpha (382 aa).

LIM zinc-binding domains are found at residues 33–92 (SVCE…LFAV) and 92–154 (VKCG…EREL). Disordered regions lie at residues 161–208 (AASD…QQRR) and 252–286 (KLAR…MEGI). The homeobox DNA-binding region spans 195–254 (PKRPRTILTTQQRRAFKASFEVSSKPCRKVRETLAAETGLSVRVVQVWFQNQRAKMKKLA). A compositionally biased stretch (low complexity) spans 256 to 269 (RQQQQQQDQQNTQR).

The protein resides in the nucleus. In terms of biological role, acts as a transcriptional activator by binding to an A/T-rich sequence, the FLAT element, in the insulin gene promoter. Required for development of the roof plate and, in turn, for specification of dorsal cell fates in the CNS and developing vertebrae. This is LIM homeobox transcription factor 1-alpha (Lmx1a) from Mus musculus (Mouse).